A 392-amino-acid polypeptide reads, in one-letter code: MTPEEQLRIIKEGTVEIIEEEELLKKLKEGRPLRVKAGFDPTAPDLHLGHVVLLQKLRQFQQLGHEVFFIIGDFTAMIGDPTGRSQTRPPLSREQVLENAKTYEHQVFKVLIPEKTTVVFNSTWLEELGTKGLIELCAKYTVARMLEREDFSKRFKEGIPIYIHEFIYPLLQAYDSVAIKADVEIGGTDQKFNLLIGRDIQREYGQEPQVCITLPLLVGTDGVRKMSKSYGNYVGITEDPKTMFAKIMSIPDEIMWDWFLLLTDYNKEEIEKMRREMHPMEAKKLLAFTIVKRFHSEEEARKAKEWWEKTFSQREFPEDAPLVKLNEKKLRAVDFLVKIGAVKSKNEARRVIQGGGLKINGEKVTDPNTEIEINGELKVKVGKKKFYRVVSG.

The 'HIGH' region signature appears at 41-50 (PTAPDLHLGH). The 'KMSKS' region motif lies at 225 to 229 (KMSKS). Residue lysine 228 coordinates ATP. The region spanning 330-390 (LRAVDFLVKI…VGKKKFYRVV (61 aa)) is the S4 RNA-binding domain.

It belongs to the class-I aminoacyl-tRNA synthetase family. TyrS type 2 subfamily. Homodimer.

It is found in the cytoplasm. The catalysed reaction is tRNA(Tyr) + L-tyrosine + ATP = L-tyrosyl-tRNA(Tyr) + AMP + diphosphate + H(+). Functionally, catalyzes the attachment of tyrosine to tRNA(Tyr) in a two-step reaction: tyrosine is first activated by ATP to form Tyr-AMP and then transferred to the acceptor end of tRNA(Tyr). The chain is Tyrosine--tRNA ligase from Aquifex aeolicus (strain VF5).